Consider the following 376-residue polypeptide: Cytoplasmic tRNA 2-thiolation protein 2 (376 aa).

Belongs to the CTU2/NCS2 family.

Its subcellular location is the cytoplasm. It participates in tRNA modification; 5-methoxycarbonylmethyl-2-thiouridine-tRNA biosynthesis. Functionally, plays a central role in 2-thiolation of mcm(5)S(2)U at tRNA wobble positions of tRNA(Lys), tRNA(Glu) and tRNA(Gln). May act by forming a heterodimer with NCS6 that ligates sulfur from thiocarboxylated URM1 onto the uridine of tRNAs at wobble position. Prior mcm(5) tRNA modification by the elongator complex is required for 2-thiolation. May also be involved in protein urmylation. The chain is Cytoplasmic tRNA 2-thiolation protein 2 from Coccidioides immitis (strain RS) (Valley fever fungus).